The sequence spans 596 residues: MTDLTAQDAAWSTRDHLDDPVIGELRNRFGPDAFTVQATRTGIPVVWVKREQLLEVGDFLKKLPKPYVMLFDLHGMDERLRTHRDGLPAADFSVFYHLISIERNRDIMLKVALSENDLRVPTFTKLFPNANWYERETWEMFGIDIEGHPHLTRIMMPQTWEGHPLRKDYPARATEFDPFELTKAKQDLEMEALTFKPEDWGMKRGTDNEDFMFLNLGPNHPSAHGAFRIILQLDGEEIVDCVPDIGYHHRGAEKMGERQSWHSYIPYTDRIEYLGGCVNEMPYVLAVEKLAGITVPDRVNVIRVMLSELFRINSHLLYISTFIQDVGAMTPVFFAFTDRQKIYDLVEAITGFRMHPAWFRIGGVAHDLPRGWDRLLREFLEWMPKRLDSYEKAALRNTILKGRSQGVAAYGAKEALEWGTTGAGLRATGIDFDVRKWRPYSGYENFDFEVPVGGGVSDCYTRVMLKVEELRQSLRILQQCLDNMPEGPFKADHPLTTPPPKERTLQHIETLITHFLQVSWGPVMPAQESFQMVEATKGINSYYLTSDGSTMSYRTRVRTPSFAHLQQIPSAIRGSLVSDLIVYLGSIDFVMSDVDR.

The segment at 1–186 (MTDLTAQDAA…DPFELTKAKQ (186 aa)) is NADH dehydrogenase I subunit C. Residues 210-596 (DFMFLNLGPN…IDFVMSDVDR (387 aa)) form an NADH dehydrogenase I subunit D region.

This sequence in the N-terminal section; belongs to the complex I 30 kDa subunit family. The protein in the C-terminal section; belongs to the complex I 49 kDa subunit family. NDH-1 is composed of 13 different subunits. Subunits NuoB, CD, E, F, and G constitute the peripheral sector of the complex.

Its subcellular location is the cell inner membrane. It catalyses the reaction a quinone + NADH + 5 H(+)(in) = a quinol + NAD(+) + 4 H(+)(out). Its function is as follows. NDH-1 shuttles electrons from NADH, via FMN and iron-sulfur (Fe-S) centers, to quinones in the respiratory chain. The immediate electron acceptor for the enzyme in this species is believed to be ubiquinone. Couples the redox reaction to proton translocation (for every two electrons transferred, four hydrogen ions are translocated across the cytoplasmic membrane), and thus conserves the redox energy in a proton gradient. This is NADH-quinone oxidoreductase subunit C/D from Salmonella dublin (strain CT_02021853).